Consider the following 148-residue polypeptide: MLLNKSLLLLVAFVFAIVSATTYSEFKITGTNPLTQETCDPSIVYTSQNGACQGVCGMFGKLVATSNSTQFNVEMYGSAGCVGPLGTTGLTCLPNEQVIKVTETISVVCFADKDEPSGDDSSGDDSSAAATMIASFSAILIALLFALL.

Positions 1-20 (MLLNKSLLLLVAFVFAIVSA) are cleaved as a signal peptide. An N-linked (GlcNAc...) asparagine glycan is attached at Asn-67. Asp-125 carries GPI-like-anchor amidated aspartate lipidation. Residues 126-148 (SSAAATMIASFSAILIALLFALL) constitute a propeptide, removed in mature form.

Belongs to the ponticulin family. In terms of processing, the GPI-like-anchor contains a phosphoceramide group, rather than a phosphatidyl group.

The protein resides in the cell membrane. This chain is Ponticulin-like protein D (ponD), found in Dictyostelium discoideum (Social amoeba).